The chain runs to 80 residues: Exodeoxyribonuclease 7 small subunit (80 aa).

This sequence belongs to the XseB family. Heterooligomer composed of large and small subunits.

Its subcellular location is the cytoplasm. It catalyses the reaction Exonucleolytic cleavage in either 5'- to 3'- or 3'- to 5'-direction to yield nucleoside 5'-phosphates.. Bidirectionally degrades single-stranded DNA into large acid-insoluble oligonucleotides, which are then degraded further into small acid-soluble oligonucleotides. The protein is Exodeoxyribonuclease 7 small subunit of Citrobacter koseri (strain ATCC BAA-895 / CDC 4225-83 / SGSC4696).